Reading from the N-terminus, the 88-residue chain is Small ribosomal subunit protein bS18B (88 aa).

Belongs to the bacterial ribosomal protein bS18 family. Part of the 30S ribosomal subunit. Forms a tight heterodimer with protein bS6.

In terms of biological role, binds as a heterodimer with protein bS6 to the central domain of the 16S rRNA, where it helps stabilize the platform of the 30S subunit. The protein is Small ribosomal subunit protein bS18B (rpsR2) of Mycobacterium bovis (strain ATCC BAA-935 / AF2122/97).